The sequence spans 734 residues: Photosystem I P700 chlorophyll a apoprotein A2 (734 aa).

The next 8 membrane-spanning stretches (helical) occupy residues 46–69 (IFAS…FHVA), 135–158 (LYTG…LHLQ), 175–199 (LNHH…HVAI), 273–291 (IAHH…GHMY), 330–353 (IHFQ…QHMY), 369–395 (AALY…IFFI), 417–439 (AIKS…LYVH), and 517–535 (FLVH…LILV). Positions 559 and 568 each coordinate [4Fe-4S] cluster. Helical transmembrane passes span 575–596 (AFYL…YWHW) and 643–665 (LSVW…MFLI). H654, M662, and Y670 together coordinate chlorophyll a. Phylloquinone is bound at residue W671. The helical transmembrane segment at 707-727 (LVGLAHFSVGYIFTYAAFLIA) threads the bilayer.

The protein belongs to the PsaA/PsaB family. As to quaternary structure, the PsaA/B heterodimer binds the P700 chlorophyll special pair and subsequent electron acceptors. PSI consists of a core antenna complex that captures photons, and an electron transfer chain that converts photonic excitation into a charge separation. The eukaryotic PSI reaction center is composed of at least 11 subunits. It depends on P700 is a chlorophyll a/chlorophyll a' dimer, A0 is one or more chlorophyll a, A1 is one or both phylloquinones and FX is a shared 4Fe-4S iron-sulfur center. as a cofactor.

Its subcellular location is the plastid. The protein resides in the chloroplast thylakoid membrane. The catalysed reaction is reduced [plastocyanin] + hnu + oxidized [2Fe-2S]-[ferredoxin] = oxidized [plastocyanin] + reduced [2Fe-2S]-[ferredoxin]. In terms of biological role, psaA and PsaB bind P700, the primary electron donor of photosystem I (PSI), as well as the electron acceptors A0, A1 and FX. PSI is a plastocyanin-ferredoxin oxidoreductase, converting photonic excitation into a charge separation, which transfers an electron from the donor P700 chlorophyll pair to the spectroscopically characterized acceptors A0, A1, FX, FA and FB in turn. Oxidized P700 is reduced on the lumenal side of the thylakoid membrane by plastocyanin. The polypeptide is Photosystem I P700 chlorophyll a apoprotein A2 (Illicium oligandrum (Star anise)).